Here is a 183-residue protein sequence, read N- to C-terminus: GTP cyclohydrolase 1 (183 aa).

Residues cysteine 71, histidine 74, and cysteine 142 each contribute to the Zn(2+) site.

It belongs to the GTP cyclohydrolase I family. Toroid-shaped homodecamer, composed of two pentamers of five dimers.

The catalysed reaction is GTP + H2O = 7,8-dihydroneopterin 3'-triphosphate + formate + H(+). Its pathway is cofactor biosynthesis; 7,8-dihydroneopterin triphosphate biosynthesis; 7,8-dihydroneopterin triphosphate from GTP: step 1/1. The protein is GTP cyclohydrolase 1 of Leptospira borgpetersenii serovar Hardjo-bovis (strain JB197).